A 92-amino-acid polypeptide reads, in one-letter code: Acylphosphatase (92 aa).

The Acylphosphatase-like domain occupies 5–92 (RVHIIVSGLV…TSCREFRILT (88 aa)). Residues R20 and N38 contribute to the active site.

Belongs to the acylphosphatase family.

The enzyme catalyses an acyl phosphate + H2O = a carboxylate + phosphate + H(+). The chain is Acylphosphatase (acyP) from Chlorobaculum tepidum (strain ATCC 49652 / DSM 12025 / NBRC 103806 / TLS) (Chlorobium tepidum).